A 197-amino-acid polypeptide reads, in one-letter code: MAASPKINRREHILQCLATMLETNPGQRITTAKLAAEVGVSEAALYRHFPSKARMFEGLIDFIEESLLSRINLIMDEEKDTMKRCQHLLQLLLIFAERNPGISRLLNGDALLGEHDRLRSRIGQIFSKIETHLKQILREKTLREGKGFNLDEAILANLLLAVAEGRISQFVRSEFKQKPTTHFEEQWVFIQQQLLQS.

Positions 7–67 constitute an HTH tetR-type domain; the sequence is INRREHILQC…GLIDFIEESL (61 aa). Residues 30 to 49 constitute a DNA-binding region (H-T-H motif); that stretch reads TTAKLAAEVGVSEAALYRHF.

This sequence belongs to the nucleoid occlusion factor SlmA family. Homodimer. Interacts with FtsZ.

The protein resides in the cytoplasm. The protein localises to the nucleoid. Required for nucleoid occlusion (NO) phenomenon, which prevents Z-ring formation and cell division over the nucleoid. Acts as a DNA-associated cell division inhibitor that binds simultaneously chromosomal DNA and FtsZ, and disrupts the assembly of FtsZ polymers. SlmA-DNA-binding sequences (SBS) are dispersed on non-Ter regions of the chromosome, preventing FtsZ polymerization at these regions. The protein is Nucleoid occlusion factor SlmA of Shewanella woodyi (strain ATCC 51908 / MS32).